Reading from the N-terminus, the 415-residue chain is Sphingomyelin synthase-related protein 1 (415 aa).

The 67-residue stretch at 12-78 (WTTKHVAVWL…MLSVRKLQKI (67 aa)) folds into the SAM domain. A run of 4 helical transmembrane segments spans residues 153-173 (ILSC…MVIV), 201-221 (FAMT…VLLL), 232-252 (LCSL…VTSL), and 277-297 (FAIW…GDYM). The active site involves His301. A helical transmembrane segment spans residues 322–342 (FLHTLSWVLNLFGIFFILAAH). Residues His344 and Asp348 contribute to the active site. Residues 347 to 367 (IDVFIAFYITTRLFLYYHTLA) form a helical membrane-spanning segment. At 368-415 (NTRAYQQSRRARIWFPMFSFFECNVNGTVPNEYCWPFSKPAIMKRLIG) the chain is on the cytoplasmic side.

Belongs to the sphingomyelin synthase family.

Its subcellular location is the endoplasmic reticulum membrane. The enzyme catalyses an N-acylsphing-4-enine + a 1,2-diacyl-sn-glycero-3-phosphoethanolamine = an N-acylsphing-4-enine 1-phosphoethanolamine + a 1,2-diacyl-sn-glycerol. It carries out the reaction an N-acylsphinganine + a 1,2-diacyl-sn-glycero-3-phosphoethanolamine = an N-acylsphinganine-1-phosphoethanolamine + a 1,2-diacyl-sn-glycerol. It catalyses the reaction an N-acyl-(4R)-4-hydroxysphinganine + a 1,2-diacyl-sn-glycero-3-phosphoethanolamine = an N-acyl-(4R)-4-hydroxysphinganine-1-phosphoethanolamine + a 1,2-diacyl-sn-glycerol. The catalysed reaction is N-hexadecanoylsphinganine + a 1,2-diacyl-sn-glycero-3-phosphoethanolamine = N-hexadecanoyl-sphinganine-1-phosphoethanolamine + a 1,2-diacyl-sn-glycerol. The enzyme catalyses N-hexadecanoyl-(4R)-hydroxysphinganine + a 1,2-diacyl-sn-glycero-3-phosphoethanolamine = N-hexadecanoyl-(4R)-hydroxysphinganine-1-phosphoethanolamine + a 1,2-diacyl-sn-glycerol. It functions in the pathway sphingolipid metabolism. In terms of biological role, synthesizes sphingolipids through transfer of a phosphatidyl head group from a glycerophospholipid on to the primary hydroxyl of a ceramide in the lumen of the endoplasmic reticulum. Catalyzes the synthesis of ceramide phosphoethanolamines (CPEs) (such as N-acylsphing-4-enine 1-phosphoethanolamine) by transferring phosphoethanolamine head group, which is smaller and more hydrophilic than the phosphocholine (PC) headgroup transferred in the canonical sphingomyelin synthesis (SMS) reaction by SMS1 or SMS2, from a phosphatidylethanolamine (1,2-diacyl-sn-glycero-3-phosphoethanolamine, PE) to a ceramide (such as N-acylsphing-4-enine). The larger PC prevents an efficient fit in the enzyme's catalytic pocket, leading to little or no SMS activity. In vitro, in the absence of ceramide, it has PLC activity with preference for phosphatidylinositol and phosphatidic acid, but also hydrolyzes phosphatidylethanolamine. The sequence is that of Sphingomyelin synthase-related protein 1 from Homo sapiens (Human).